Consider the following 287-residue polypeptide: 4-hydroxybenzoate octaprenyltransferase (287 aa).

6 helical membrane-spanning segments follow: residues 41-61 (WPLL…GCAM), 89-109 (WEAI…ILPL), 133-153 (FFAI…PMAF), 158-178 (DTVP…SVAY), 202-224 (FGRF…YVWI), and 267-287 (NNWL…LAGS).

This sequence belongs to the UbiA prenyltransferase family. It depends on Mg(2+) as a cofactor.

The protein resides in the cell inner membrane. The catalysed reaction is all-trans-octaprenyl diphosphate + 4-hydroxybenzoate = 4-hydroxy-3-(all-trans-octaprenyl)benzoate + diphosphate. Its pathway is cofactor biosynthesis; ubiquinone biosynthesis. Its function is as follows. Catalyzes the prenylation of para-hydroxybenzoate (PHB) with an all-trans polyprenyl group. Mediates the second step in the final reaction sequence of ubiquinone-8 (UQ-8) biosynthesis, which is the condensation of the polyisoprenoid side chain with PHB, generating the first membrane-bound Q intermediate 3-octaprenyl-4-hydroxybenzoate. In Burkholderia lata (strain ATCC 17760 / DSM 23089 / LMG 22485 / NCIMB 9086 / R18194 / 383), this protein is 4-hydroxybenzoate octaprenyltransferase.